Reading from the N-terminus, the 210-residue chain is Thymidylate kinase (210 aa).

11-18 (GVDGAGKT) lines the ATP pocket.

The protein belongs to the thymidylate kinase family.

The enzyme catalyses dTMP + ATP = dTDP + ADP. Functionally, phosphorylation of dTMP to form dTDP in both de novo and salvage pathways of dTTP synthesis. This is Thymidylate kinase (tmk) from Mycoplasma genitalium (strain ATCC 33530 / DSM 19775 / NCTC 10195 / G37) (Mycoplasmoides genitalium).